A 582-amino-acid polypeptide reads, in one-letter code: Putative phospholipase B-like 2 (582 aa).

A signal peptide spans 1-42; sequence MTRLIRSKKQFLIRSLHSVFYYLGSLLHSTFEMNVFIGLLLA. N-linked (GlcNAc...) asparagine glycosylation is found at Asn91, Asn141, Asn178, Asn224, and Asn318. A disulfide bond links Cys139 and Cys146. Cysteines 480 and 482 form a disulfide. N-linked (GlcNAc...) asparagine glycosylation is present at Asn502.

The protein belongs to the phospholipase B-like family.

The protein resides in the secreted. In terms of biological role, putative phospholipase. The chain is Putative phospholipase B-like 2 from Caenorhabditis elegans.